The primary structure comprises 585 residues: Formate--tetrahydrofolate ligase (585 aa).

65–72 (TPHGEGKT) contributes to the ATP binding site.

It belongs to the formate--tetrahydrofolate ligase family.

The enzyme catalyses (6S)-5,6,7,8-tetrahydrofolate + formate + ATP = (6R)-10-formyltetrahydrofolate + ADP + phosphate. Its pathway is one-carbon metabolism; tetrahydrofolate interconversion. The protein is Formate--tetrahydrofolate ligase of Shewanella baltica (strain OS155 / ATCC BAA-1091).